The chain runs to 247 residues: uncharacterized protein (247 aa).

Positions leucine 225–leucine 247 are disordered.

This is an uncharacterized protein from Methanocaldococcus jannaschii (strain ATCC 43067 / DSM 2661 / JAL-1 / JCM 10045 / NBRC 100440) (Methanococcus jannaschii).